Consider the following 314-residue polypeptide: Prohormone-3 (314 aa).

The first 19 residues, 1-19 (MGRVLLSASSLLLHIQVFT), serve as a signal peptide directing secretion. The chain crosses the membrane as a helical span at residues 90–112 (YTCVALTVVALVSTMHFGVEAWG).

The protein localises to the membrane. This is Prohormone-3 from Apis mellifera (Honeybee).